Consider the following 208-residue polypeptide: V-type ATP synthase subunit D (208 aa).

The protein belongs to the V-ATPase D subunit family.

Produces ATP from ADP in the presence of a proton gradient across the membrane. This is V-type ATP synthase subunit D from Chlamydia abortus (strain DSM 27085 / S26/3) (Chlamydophila abortus).